The sequence spans 261 residues: Ribosomal RNA small subunit methyltransferase A (261 aa).

His12, Leu14, Gly39, Glu60, Asp81, and Asn104 together coordinate S-adenosyl-L-methionine.

It belongs to the class I-like SAM-binding methyltransferase superfamily. rRNA adenine N(6)-methyltransferase family. RsmA subfamily.

The protein resides in the cytoplasm. It carries out the reaction adenosine(1518)/adenosine(1519) in 16S rRNA + 4 S-adenosyl-L-methionine = N(6)-dimethyladenosine(1518)/N(6)-dimethyladenosine(1519) in 16S rRNA + 4 S-adenosyl-L-homocysteine + 4 H(+). In terms of biological role, specifically dimethylates two adjacent adenosines (A1518 and A1519) in the loop of a conserved hairpin near the 3'-end of 16S rRNA in the 30S particle. May play a critical role in biogenesis of 30S subunits. The sequence is that of Ribosomal RNA small subunit methyltransferase A from Albidiferax ferrireducens (strain ATCC BAA-621 / DSM 15236 / T118) (Rhodoferax ferrireducens).